The following is a 284-amino-acid chain: MNTFFLSLLSGAAAGTSTDLVFFPIDTIKTRLQAKGGFFANGGYKGIYRGLGSAVVASAPGASLFFISYDYMKVKSRPYISKLYSQGSEQLIDTTTHMLSSSIGEICACLVRVPAEVVKQRTQVHSTNSSWQTLQSILRNDNKEGLRKNLYRGWSTTIMREIPFTCIQFPLYEYLKKTWAKANGQSQVEPWKGAICGSIAGGIAAATTTPLDFLKTRLMLNKTTASLGSVIIRIYREEGPAVFFSGVGPRTMWISAGGAIFLGMYETVHSLLSKSFPTAGEMRA.

3 Solcar repeats span residues 2–75 (NTFF…MKVK), 92–178 (IDTT…LKKT), and 192–271 (KGAI…VHSL). Helical transmembrane passes span 5-25 (FLSL…FFPI), 50-70 (GLGS…ISYD), 98-118 (MLSS…AEVV), 153-169 (GWST…CIQF), 194-214 (AICG…LDFL), and 252-272 (MWIS…HSLL).

It belongs to the mitochondrial carrier (TC 2.A.29) family.

It localises to the mitochondrion inner membrane. The polypeptide is Putative mitochondrial carrier protein PET8 (PET8) (Saccharomyces cerevisiae (strain ATCC 204508 / S288c) (Baker's yeast)).